Consider the following 370-residue polypeptide: Probable G-protein coupled receptor 85 (370 aa).

Residues 1 to 25 are Extracellular-facing; it reads MANYSHAADNILQNLSPLTAFLKLT. Residue N3 is glycosylated (N-linked (GlcNAc...) asparagine). A helical membrane pass occupies residues 26–46; sequence SLGFIIGVSVVGNLLISILLV. The Cytoplasmic portion of the chain corresponds to 47–57; that stretch reads KDKTLHRAPYY. A helical membrane pass occupies residues 58 to 78; the sequence is FLLDLCCSDILRSAICFPFVF. Residues 79–96 are Extracellular-facing; it reads NSVKNGSTWTYGTLTCKV. N83 is a glycosylation site (N-linked (GlcNAc...) asparagine). A disulfide bridge links C94 with C172. The helical transmembrane segment at 97–117 threads the bilayer; that stretch reads IAFLGVLSCFHTAFMLFCISV. Residues 118–137 are Cytoplasmic-facing; sequence TRYLAIAHHRFYTKRLTFWT. A helical membrane pass occupies residues 138–158; sequence CLAVICMVWTLSVAMAFPPVL. Residues 159–188 are Extracellular-facing; it reads DVGTYSFIREEDQCTFQHRSFRANDSLGFM. N-linked (GlcNAc...) asparagine glycosylation is present at N182. A helical transmembrane segment spans residues 189–209; the sequence is LLLALILLATQLVYLKLIFFV. At 210–286 the chain is on the cytoplasmic side; the sequence is HDRRKMKPVQ…FKMEKRISRM (77 aa). Residues 287-307 traverse the membrane as a helical segment; that stretch reads FYIMTFLFLTLWGPYLVACYW. Residues 308–313 lie on the Extracellular side of the membrane; the sequence is RVFARG. A helical membrane pass occupies residues 314-334; sequence PVVPGGFLTAAVWMSFAQAGI. The Cytoplasmic segment spans residues 335-370; that stretch reads NPFVCIFSNRELRRCFSTTLLYCRKSRLPREPYCVI.

Belongs to the G-protein coupled receptor 1 family. In terms of assembly, interacts with DLG4 and DLG3. In terms of tissue distribution, highly expressed in brain and testis. Lower levels in small intestine, placenta and spleen. In brain regions, detected in all regions tested, but somewhat lower levels in the corpus callosum, medulla and spinal cord.

Its subcellular location is the cell membrane. It is found in the endoplasmic reticulum. Orphan receptor. The chain is Probable G-protein coupled receptor 85 (GPR85) from Homo sapiens (Human).